A 381-amino-acid polypeptide reads, in one-letter code: MKIVIAPDSYKESLSASEVAQAIEKGFREIFPDAQYVSVPVADGGEGTVEAMIAATQGAERHAWVTGPLGEKVNASWGISGDGKTAFIEMAAASGLELVPAEKRDPLVTTSRGTGELILQALESGATNIIIGIGGSATNDGGAGMVQALGAKLCDANGNEIGFGGGSLNTLNDIDISGLDPRLKDCVIRVACDVTNPLVGDNGASRIFGPQKGASEAMIVELDNNLSHYAEVIKKALHVDVKDVPGAGAAGGMGAALMAFLGAELKSGIEIVTTALNLEEHIHDCTLVITGEGRIDSQSIHGKVPIGVANVAKKYHKPVIGIAGSLTDDVGVVHQHGIDAVFSVLTSIGTLDEAFRGAYDNICRASRNIAATLAIGMRNAG.

This sequence belongs to the glycerate kinase type-1 family.

The catalysed reaction is (R)-glycerate + ATP = (2R)-2-phosphoglycerate + ADP + H(+). Catalyzes the transfer of the phosphate group from adenosine triphosphate (ATP) to (R)-glycerate to form (2R)-2-phosphoglycerate, an enzymatic step in (L)-glucarate/galactarate catabolic pathway. This is Glycerate 2-kinase (garK) from Escherichia coli (strain K12).